The following is a 316-amino-acid chain: Pleckstrin homology domain-containing family F member 1 homolog (316 aa).

Residues Val35 to Glu131 enclose the PH domain. The FYVE-type zinc finger occupies Asp152 to Lys212. Residues Cys158, Cys161, Cys175, Cys178, Cys183, Cys186, Cys204, and Cys207 each coordinate Zn(2+). The disordered stretch occupies residues Pro215–Cys316. Positions Ser244–Thr253 are enriched in acidic residues. The segment covering Ser279 to Ser292 has biased composition (low complexity). Positions Val298–Cys316 are enriched in polar residues.

As to quaternary structure, interacts with Gdi (Rab GDP dissociation inhibitor). In ovaries, expressed both in the germ line cells and in the overlying somatic follicular epithelium.

The protein resides in the apical cell membrane. It localises to the endosome membrane. The protein localises to the cytoplasm. It is found in the cell cortex. Functions in the regulation of endosome morphology and late endosome formation. Has a role in controlling trafficking from early to late endosomes and from late endosomes to lysosomes. Important for localization of Gdi to the endosomal membranes. May function in controlling the activity of multiple regulators in the endocytic pathway, perhaps by positively controlling those involved in the early steps of endocytosis such as Rab5 and hrs, and negative regulating those involved in the late stages of endocytosis like car and VhaSFD. The protein is Pleckstrin homology domain-containing family F member 1 homolog of Drosophila melanogaster (Fruit fly).